The primary structure comprises 364 residues: Anhydro-N-acetylmuramic acid kinase (364 aa).

Gly-11–Asp-18 contributes to the ATP binding site.

This sequence belongs to the anhydro-N-acetylmuramic acid kinase family.

The enzyme catalyses 1,6-anhydro-N-acetyl-beta-muramate + ATP + H2O = N-acetyl-D-muramate 6-phosphate + ADP + H(+). The protein operates within amino-sugar metabolism; 1,6-anhydro-N-acetylmuramate degradation. Its pathway is cell wall biogenesis; peptidoglycan recycling. Its function is as follows. Catalyzes the specific phosphorylation of 1,6-anhydro-N-acetylmuramic acid (anhMurNAc) with the simultaneous cleavage of the 1,6-anhydro ring, generating MurNAc-6-P. Is required for the utilization of anhMurNAc either imported from the medium or derived from its own cell wall murein, and thus plays a role in cell wall recycling. The sequence is that of Anhydro-N-acetylmuramic acid kinase from Pseudomonas syringae pv. tomato (strain ATCC BAA-871 / DC3000).